Reading from the N-terminus, the 111-residue chain is Nucleoid-associated protein Cag_1190 (111 aa).

The protein belongs to the YbaB/EbfC family. As to quaternary structure, homodimer.

It localises to the cytoplasm. It is found in the nucleoid. Functionally, binds to DNA and alters its conformation. May be involved in regulation of gene expression, nucleoid organization and DNA protection. The protein is Nucleoid-associated protein Cag_1190 of Chlorobium chlorochromatii (strain CaD3).